A 1171-amino-acid chain; its full sequence is Protein diaphanous homolog 3 (1171 aa).

Residues 1–15 are compositionally biased toward basic and acidic residues; that stretch reads MERHRARALGRDSKS. The segment at 1–40 is disordered; that stretch reads MERHRARALGRDSKSSRRKGLQSAPPAGPYEPGEKRPKLH. A Nuclear localization signal motif is present at residues 16–39; the sequence is SRRKGLQSAPPAGPYEPGEKRPKL. Position 47 is a phosphothreonine (T47). Position 56 is a phosphoserine (S56). The interval 60 to 95 is disordered; it reads PGSKKERPPLPHLKTVSGISDSSSLSSETMENNPKA. The span at 76 to 86 shows a compositional bias: low complexity; sequence SGISDSSSLSS. In terms of domain architecture, GBD/FH3 spans 93 to 455; it reads PKALPESEVL…QIVLHRDGTD (363 aa). S154 carries the post-translational modification Phosphoserine. Coiled-coil stretches lie at residues 373–403 and 478–533; these read EHKE…YSML and QAKL…FGAL. Residues 532–601 form a disordered region; that stretch reads ALPPGTKIPL…PPPPLGFLGG (70 aa). The region spanning 540–610 is the FH1 domain; sequence PLQPSVEGEA…GQSSIPLNLP (71 aa). Residues 553–596 show a composition bias toward pro residues; that stretch reads ALPPAPPALSGGVPPPPPPPPPPPPPLPGMPMPFGGPVPPPPPL. S604 is modified (phosphoserine). The FH2 domain occupies 615-1013; sequence PKKEFKPEIS…EKRARIAKER (399 aa). Coiled coils occupy residues 887–918 and 988–1038; these read DKAS…LETF and MLAL…GDET. In terms of domain architecture, DAD spans 1036-1066; the sequence is DETGVMDSLLEALQSGAAFRDRRKRTPKLKD. Phosphoserine occurs at positions 1072 and 1157. Residues 1162–1171 carry the Nuclear export signal motif; sequence EALLARLRAL.

It belongs to the formin homology family. Diaphanous subfamily. Post-translationally, ubiquitinated.

Its subcellular location is the cytoplasm. The protein localises to the nucleus. In terms of biological role, actin nucleation and elongation factor required for the assembly of F-actin structures, such as actin cables and stress fibers. Required for cytokinesis, stress fiber formation and transcriptional activation of the serum response factor. Binds to GTP-bound form of Rho and to profilin: acts in a Rho-dependent manner to recruit profilin to the membrane, where it promotes actin polymerization. DFR proteins couple Rho and Src tyrosine kinase during signaling and the regulation of actin dynamics. Also acts as an actin nucleation and elongation factor in the nucleus by promoting nuclear actin polymerization inside the nucleus to drive serum-dependent SRF-MRTFA activity. This Mus musculus (Mouse) protein is Protein diaphanous homolog 3 (Diaph3).